Consider the following 175-residue polypeptide: Translation initiation factor IF-3 (175 aa).

Belongs to the IF-3 family. Monomer.

It localises to the cytoplasm. IF-3 binds to the 30S ribosomal subunit and shifts the equilibrium between 70S ribosomes and their 50S and 30S subunits in favor of the free subunits, thus enhancing the availability of 30S subunits on which protein synthesis initiation begins. In Staphylococcus saprophyticus subsp. saprophyticus (strain ATCC 15305 / DSM 20229 / NCIMB 8711 / NCTC 7292 / S-41), this protein is Translation initiation factor IF-3.